Consider the following 223-residue polypeptide: Probable 3-beta-hydroxysteroid-Delta(8),Delta(7)-isomerase (223 aa).

A run of 4 helical transmembrane segments spans residues 28 to 48 (IVSI…LLFG), 58 to 78 (LMCW…YFVF), 115 to 135 (VEGI…YAIA), and 175 to 195 (FYYY…PSLI). In terms of domain architecture, EXPERA spans 54-196 (LDKLLMCWWT…WWVLIPSLIS (143 aa)).

This sequence belongs to the EBP family.

The protein resides in the endoplasmic reticulum membrane. The catalysed reaction is lathosterol = 5alpha-cholest-8-en-3beta-ol. The protein operates within steroid biosynthesis; sterol biosynthesis. Its function is as follows. Catalyzes the conversion of Delta(8)-sterols to their corresponding Delta(7)-isomers. This Arabidopsis thaliana (Mouse-ear cress) protein is Probable 3-beta-hydroxysteroid-Delta(8),Delta(7)-isomerase.